The sequence spans 235 residues: Protein RESISTANCE TO PHYTOPHTHORA 1, chloroplastic (235 aa).

A chloroplast-targeting transit peptide spans 1–43 (MNSATTMSASVLNYQILKFFPPQKNGFLKSPLIRGKICRFCVS). The segment covering 53 to 66 (VIEDPKEETQEKSD) has biased composition (basic and acidic residues). A disordered region spans residues 53 to 92 (VIEDPKEETQEKSDGVIVNSTEEEEERSGENSTSTGPSTV). 4 helical membrane passes run 131–151 (FEVQAYASMLIGGALSFNLIF), 158–178 (IWRLMGMWSIWMFTIPSLRAR), 188–208 (LNYLFLLVPLLNVAIPFFLKS), and 211–231 (VVWSADTVAFLGMYAWKLGWL).

The protein resides in the plastid. It localises to the chloroplast. The protein localises to the membrane. In terms of biological role, plays a positive role in the immune response to the oomycetes P.infestans, including induced oxidative burst and enhanced expression of defense-related genes. This is Protein RESISTANCE TO PHYTOPHTHORA 1, chloroplastic from Solanum tuberosum (Potato).